The primary structure comprises 115 residues: Probable 4-amino-4-deoxy-L-arabinose-phosphoundecaprenol flippase subunit ArnE (115 aa).

The next 4 membrane-spanning stretches (helical) occupy residues 1-21 (MIVGYLLVVLVSLLTCGGQLC), 43-63 (WLALAVLLLGLGMAVWLNVLQ), 65-85 (LPLSLAYPTLSLNFVLVTLAA), and 93-113 (TTARHWYGVASIMLGILLMSI). Residues 44–113 (LALAVLLLGL…IMLGILLMSI (70 aa)) enclose the EamA domain.

The protein belongs to the ArnE family. As to quaternary structure, heterodimer of ArnE and ArnF.

The protein localises to the cell inner membrane. It participates in bacterial outer membrane biogenesis; lipopolysaccharide biosynthesis. Functionally, translocates 4-amino-4-deoxy-L-arabinose-phosphoundecaprenol (alpha-L-Ara4N-phosphoundecaprenol) from the cytoplasmic to the periplasmic side of the inner membrane. The chain is Probable 4-amino-4-deoxy-L-arabinose-phosphoundecaprenol flippase subunit ArnE from Serratia proteamaculans (strain 568).